A 295-amino-acid polypeptide reads, in one-letter code: MGHIFEGVGVALATPFTHNEVDFDALRRHVKYLLDNNAKSIVVNGTTAENPTLTDEEKDQILEVVVNVVDGRVPVIAGTGTNNTQKSIQASVRAREIGADAIMLITPYYNKTNQRGLIAHFTTIADAVKLPVVLYNVPSRTNMTIDAETVETLSENEYIVALKDATNDFDYLEDLKQRLNLDEFALYSGNDDNIVDYFNQGGHGVISVVANVIPNAFQSLYDAKQNDENIQSQFQPIQTLLDALAVDVNPIPVKALTAVEGFGNYEVRLPLVTLEDSDRQKLEQAYEQFKVGGNS.

Thr47 contributes to the pyruvate binding site. The Proton donor/acceptor role is filled by Tyr135. Residue Lys163 is the Schiff-base intermediate with substrate of the active site. Pyruvate is bound at residue Ile206.

It belongs to the DapA family. Homodimer.

It localises to the cytoplasm. It catalyses the reaction L-aspartate 4-semialdehyde + pyruvate = (2S,4S)-4-hydroxy-2,3,4,5-tetrahydrodipicolinate + H2O + H(+). The protein operates within amino-acid biosynthesis; L-lysine biosynthesis via DAP pathway; (S)-tetrahydrodipicolinate from L-aspartate: step 3/4. In terms of biological role, catalyzes the condensation of (S)-aspartate-beta-semialdehyde [(S)-ASA] and pyruvate to 4-hydroxy-tetrahydrodipicolinate (HTPA). This is 4-hydroxy-tetrahydrodipicolinate synthase from Staphylococcus saprophyticus subsp. saprophyticus (strain ATCC 15305 / DSM 20229 / NCIMB 8711 / NCTC 7292 / S-41).